Consider the following 223-residue polypeptide: Type 3 secretion system stator protein (223 aa).

The protein belongs to the SctL stator family. The core secretion machinery of the T3SS is composed of approximately 20 different proteins, including cytoplasmic components, a base, an export apparatus and a needle. This subunit is part of the cytosolic complex. Interacts directly with YscN/SctN (T3SS ATPase) and YscQ/SctQ (the major sorting platform component). Forms homodimers.

It localises to the cytoplasm. Functionally, component of the type III secretion system (T3SS), also called injectisome, which is used to inject bacterial effector proteins into eukaryotic host cells. Acts as a regulator of the YscN/SctN ATPase activity. Overexpression of YscL/SctL abolishes type III secretion and down-regulates the expression of secretion apparatus components. This Yersinia enterocolitica protein is Type 3 secretion system stator protein.